Consider the following 7481-residue polypeptide: Polyketide synthase GfsA (7481 aa).

Residues 24–1020 form a loading module (LM) region; it reads ASDEPIAVIG…ETAEFVRARL (997 aa). Residues 26-451 enclose the Ketosynthase family 3 (KS3) 1 domain; it reads DEPIAVIGLS…GTNCHVVVSA (426 aa). Positions 60 to 80 are disordered; the sequence is RVPADRETPPSTEEESADGEA. The active-site For decarboxylation activity of LM is Q197. The active-site For acyltransferase activity of LM is the S662. Residues 945–1020 form the Carrier 1 domain; that stretch reads PDPVETVRQL…ETAEFVRARL (76 aa). S980 carries the O-(pantetheine 4'-phosphoryl)serine modification. Residues 1038–1454 enclose the Ketosynthase family 3 (KS3) 2 domain; it reads DEPIAVVAMS…GTNAHVILEQ (417 aa). 4 module regions span residues 1038 to 2517, 2538 to 4063, 4084 to 5636, and 5655 to 7400; these read DEPI…AGEL, EDPI…LQRI, DDPI…GSEV, and DEPV…GEQL. Residues C1201, H1336, and H1376 each act as for beta-ketoacyl synthase 1 activity in the active site. Residues 2442-2517 form the Carrier 2 domain; sequence RVLLDLVRGR…ALAEHLAGEL (76 aa). S2477 is subject to O-(pantetheine 4'-phosphoryl)serine. Residues 2538–2964 form the Ketosynthase family 3 (KS3) 3 domain; the sequence is EDPIAIVAMS…GTNAHVIIEE (427 aa). Active-site for beta-ketoacyl synthase 2 activity residues include C2711, H2846, and H2886. Residues 3988–4063 enclose the Carrier 3 domain; sequence QALQDLVLTE…ATTEYLLQRI (76 aa). The residue at position 4023 (S4023) is an O-(pantetheine 4'-phosphoryl)serine. The 431-residue stretch at 4084-4514 folds into the Ketosynthase family 3 (KS3) 4 domain; the sequence is DDPIAIVAMG…GTNAHVILEQ (431 aa). Active-site for beta-ketoacyl synthase 3 activity residues include C4261, H4396, and H4436. The 76-residue stretch at 5561-5636 folds into the Carrier 4 domain; that stretch reads TALLDLIRGQ…ALAEYVGSEV (76 aa). S5596 carries the O-(pantetheine 4'-phosphoryl)serine modification. One can recognise a Ketosynthase family 3 (KS3) 5 domain in the interval 5655–6081; sequence DEPVAIIGMS…GTNAHVILEQ (427 aa). Active-site for beta-ketoacyl synthase 4 activity residues include C5828, H5963, and H6003. Residues 6561 to 6685 form an N-terminal hotdog fold region; it reads HPLLGAAVAL…GVLASGAATV (125 aa). Residues 6561-6841 form the PKS/mFAS DH domain; the sequence is HPLLGAAVAL…LRPVSADTIA (281 aa). The Proton acceptor; for dehydratase activity role is filled by H6593. Residues 6700 to 6841 form a C-terminal hotdog fold region; it reads ATAVDIDGLY…LRPVSADTIA (142 aa). D6761 functions as the Proton donor; for dehydratase activity in the catalytic mechanism. One can recognise a Carrier 5 domain in the interval 7325 to 7400; sequence QELLDFVCEH…LLAGHIGEQL (76 aa). The residue at position 7360 (S7360) is an O-(pantetheine 4'-phosphoryl)serine.

Homodimer. The loading module (LM, residues 13-926) dimerizes. LM cross-links to its cognate acyl-carrier domain in a manner that seems physiological; mutation of residues in the 2 domains alters reactions efficiency in a manner predicted by the cross-linked crystal. Requires pantetheine 4'-phosphate as cofactor.

The protein operates within antibiotic biosynthesis. Functionally, first protein in the synthesis of the 16-membered macrolide antibiotics FD-891 and FD-892. Composed of 5 modules; the first is a loading module (LM) that synthesizes a starter unit used by the first elongation module for polyketide chain elongation. The starter unit is extended by multiple rounds of addition of malonyl-CoA or methylmalonyl-CoA, and other modifications to help generate the final products. The loading module (residues 1-927, LM with an inactive acyltransferase domain) preferentially decarboxylates malonyl-GfsA acyl carrier protein of the LM (ACP-LM) over methylmalonyl-GfsA ACP-LM and has no activity on malonyl-CoA or methymalonyl-CoA. LM decarboxylates malonyl-ACP-LM better than the malonyl-ACP-1 module of GfsA (i.e. the next module in the same protein) and has no activity on other malonyl-ACP modules. This is Polyketide synthase GfsA from Streptomyces halstedii.